Here is a 449-residue protein sequence, read N- to C-terminus: Naphthalene 1,2-dioxygenase system, large oxygenase component (449 aa).

Positions 39-137 (WLFLTHDSLI…LNKKCLGLKE (99 aa)) constitute a Rieske domain. Residues Cys81, His83, Cys101, and His104 each coordinate [2Fe-2S] cluster. Fe cation-binding residues include His208, His213, and Asp362.

The protein belongs to the bacterial ring-hydroxylating dioxygenase alpha subunit family. The naphthalene dioxygenase (NDO) multicomponent enzyme system is composed of an electron transfer component and a dioxygenase component (iron sulfur protein (ISP)). The electron transfer component is composed of a ferredoxin reductase (NdoR) and a ferredoxin (NdoA), and the dioxygenase component is formed of a heterohexamer (trimer of heterodimers) of three large alpha subunits (NdoB) and three small beta subunits (NdoC). The cofactor is [2Fe-2S] cluster. Fe(2+) serves as cofactor.

It carries out the reaction naphthalene + NADH + O2 + H(+) = (1R,2S)-1,2-dihydronaphthalene-1,2-diol + NAD(+). It participates in aromatic compound metabolism; naphthalene degradation. Its function is as follows. Component of the naphthalene dioxygenase (NDO) multicomponent enzyme system which catalyzes the incorporation of both atoms of molecular oxygen into naphthalene to form cis-(1R,2S)-dihydroxy-1,2-dihydronaphthalene. The alpha subunit has a catalytic role in the holoenzyme. This is Naphthalene 1,2-dioxygenase system, large oxygenase component from Pseudomonas fluorescens.